The primary structure comprises 119 residues: Large ribosomal subunit protein bL20 (119 aa).

This sequence belongs to the bacterial ribosomal protein bL20 family.

In terms of biological role, binds directly to 23S ribosomal RNA and is necessary for the in vitro assembly process of the 50S ribosomal subunit. It is not involved in the protein synthesizing functions of that subunit. This chain is Large ribosomal subunit protein bL20, found in Geobacillus kaustophilus (strain HTA426).